Here is a 204-residue protein sequence, read N- to C-terminus: Probable nicotinate-nucleotide adenylyltransferase (204 aa).

It belongs to the NadD family.

The catalysed reaction is nicotinate beta-D-ribonucleotide + ATP + H(+) = deamido-NAD(+) + diphosphate. The protein operates within cofactor biosynthesis; NAD(+) biosynthesis; deamido-NAD(+) from nicotinate D-ribonucleotide: step 1/1. Its function is as follows. Catalyzes the reversible adenylation of nicotinate mononucleotide (NaMN) to nicotinic acid adenine dinucleotide (NaAD). In Dehalococcoides mccartyi (strain ATCC BAA-2100 / JCM 16839 / KCTC 5957 / BAV1), this protein is Probable nicotinate-nucleotide adenylyltransferase.